The sequence spans 49 residues: Protein 19.5 (49 aa).

The first 23 residues, 1–23, serve as a signal peptide directing secretion; the sequence is MFRLLLNLLRHRVTYRFLVVLCA.

This chain is Protein 19.5, found in Escherichia phage T7 (Bacteriophage T7).